We begin with the raw amino-acid sequence, 97 residues long: CRISPR-associated endoribonuclease Cas2 1 (97 aa).

A Mg(2+)-binding site is contributed by Asp12.

It belongs to the CRISPR-associated endoribonuclease Cas2 protein family. In terms of assembly, homodimer, forms a heterotetramer with a Cas1 homodimer. Mg(2+) is required as a cofactor.

CRISPR (clustered regularly interspaced short palindromic repeat) is an adaptive immune system that provides protection against mobile genetic elements (viruses, transposable elements and conjugative plasmids). CRISPR clusters contain sequences complementary to antecedent mobile elements and target invading nucleic acids. CRISPR clusters are transcribed and processed into CRISPR RNA (crRNA). Functions as a ssRNA-specific endoribonuclease. Involved in the integration of spacer DNA into the CRISPR cassette. The chain is CRISPR-associated endoribonuclease Cas2 1 from Francisella tularensis subsp. novicida (strain U112).